The primary structure comprises 550 residues: Hydroxylamine reductase (550 aa).

Positions 3, 6, 18, and 25 each coordinate [2Fe-2S] cluster. Residues H249, E273, C317, C405, C433, C458, E492, and K494 each contribute to the hybrid [4Fe-2O-2S] cluster site. Position 405 is a cysteine persulfide (C405).

The protein belongs to the HCP family. It depends on [2Fe-2S] cluster as a cofactor. Hybrid [4Fe-2O-2S] cluster is required as a cofactor.

The protein localises to the cytoplasm. It carries out the reaction A + NH4(+) + H2O = hydroxylamine + AH2 + H(+). Catalyzes the reduction of hydroxylamine to form NH(3) and H(2)O. This Salmonella schwarzengrund (strain CVM19633) protein is Hydroxylamine reductase.